The chain runs to 336 residues: Protein-arginine kinase (336 aa).

The Phosphagen kinase C-terminal domain occupies 22–245 (IVMSSRIRLA…QQIINEEMQI (224 aa)). ATP is bound by residues 25 to 29 (SSRIR), His83, Arg116, 167 to 171 (RASVM), and 198 to 203 (RGIYGE).

This sequence belongs to the ATP:guanido phosphotransferase family.

It catalyses the reaction L-arginyl-[protein] + ATP = N(omega)-phospho-L-arginyl-[protein] + ADP + H(+). In terms of biological role, catalyzes the specific phosphorylation of arginine residues in proteins. The protein is Protein-arginine kinase of Staphylococcus saprophyticus subsp. saprophyticus (strain ATCC 15305 / DSM 20229 / NCIMB 8711 / NCTC 7292 / S-41).